The sequence spans 97 residues: uncharacterized protein (97 aa).

The interval isoleucine 27–aspartate 50 is disordered.

This is an uncharacterized protein from Caldicellulosiruptor saccharolyticus (Caldocellum saccharolyticum).